Here is a 102-residue protein sequence, read N- to C-terminus: Small ribosomal subunit protein uS10 (102 aa).

Belongs to the universal ribosomal protein uS10 family. As to quaternary structure, part of the 30S ribosomal subunit.

Its function is as follows. Involved in the binding of tRNA to the ribosomes. In Rhodospirillum centenum (strain ATCC 51521 / SW), this protein is Small ribosomal subunit protein uS10.